A 334-amino-acid polypeptide reads, in one-letter code: L-lactate dehydrogenase B-B chain (334 aa).

NAD(+) is bound by residues 30–58 (GQVG…VEDK) and R100. Substrate-binding residues include R107, N139, and R170. N139 serves as a coordination point for NAD(+). H194 acts as the Proton acceptor in catalysis. T249 contributes to the substrate binding site.

The protein belongs to the LDH/MDH superfamily. LDH family. As to quaternary structure, homotetramer.

The protein resides in the cytoplasm. The catalysed reaction is (S)-lactate + NAD(+) = pyruvate + NADH + H(+). The protein operates within fermentation; pyruvate fermentation to lactate; (S)-lactate from pyruvate: step 1/1. The sequence is that of L-lactate dehydrogenase B-B chain from Danio rerio (Zebrafish).